A 422-amino-acid chain; its full sequence is Replication factor C large subunit (422 aa).

An ATP-binding site is contributed by 63–70 (GPPGVGKT).

It belongs to the activator 1 small subunits family. RfcL subfamily. Heteromultimer composed of small subunits (RfcS) and large subunits (RfcL).

In terms of biological role, part of the RFC clamp loader complex which loads the PCNA sliding clamp onto DNA. This Pyrobaculum arsenaticum (strain DSM 13514 / JCM 11321 / PZ6) protein is Replication factor C large subunit.